Consider the following 254-residue polypeptide: uncharacterized protein (254 aa).

This is an uncharacterized protein from Haemophilus influenzae (strain ATCC 51907 / DSM 11121 / KW20 / Rd).